A 358-amino-acid polypeptide reads, in one-letter code: Reverse gyrase subunit A (358 aa).

A Topo IA-type catalytic domain is found at 1–351 (MNATLRIRNR…KLYLELERVV (351 aa)). The active-site O-(5'-phospho-DNA)-tyrosine intermediate is the Y78.

It belongs to the type IA topoisomerase family. In terms of assembly, heterodimer of an RgyrA and RgyrB subunit. The topoisomerase domain is shared between the two subunits. Mg(2+) is required as a cofactor.

The protein resides in the cytoplasm. Functionally, modifies the topological state of DNA by introducing positive supercoils in an ATP-dependent process; dATP also allows positive supercoiling. Increases the linking number in steps of +1. Only this subunit binds DNA, in isolation it does not hydrolyze ATP. Hydrolyzes ATP only in the presence of DNA. Transiently cleaves a single DNA strand and remains covalently bound to the 5' DNA end probably through a tyrosine residue. It changes linking number in steps of one, and nicks DNA preferentially at 5'-CNNN | 3'-sites with a strong preference for 4 pyrimidine residues. There are about 1000 heterodimers per cell. May be involved in rewinding the DNA strands in the regions of the chromosome that have opened up to allow transcription or replication. Reverse gyrase activity is reconstituted after incubation at 80 degrees Celsius for 5 minutes, positive supercoiling requires ATP and Mg(2+). In the presence of ATP it binds and nicks substrate but does not make closed product. The polypeptide is Reverse gyrase subunit A (Methanopyrus kandleri (strain AV19 / DSM 6324 / JCM 9639 / NBRC 100938)).